Here is a 570-residue protein sequence, read N- to C-terminus: Urease subunit alpha (570 aa).

Positions 131–570 constitute a Urease domain; it reads GGFDAHIHFI…LPMAQRYFLF (440 aa). Ni(2+) is bound by residues histidine 136, histidine 138, and lysine 219. An N6-carboxylysine modification is found at lysine 219. Histidine 221 contributes to the substrate binding site. Histidine 248 and histidine 274 together coordinate Ni(2+). Catalysis depends on histidine 322, which acts as the Proton donor. Aspartate 362 is a binding site for Ni(2+).

The protein belongs to the metallo-dependent hydrolases superfamily. Urease alpha subunit family. In terms of assembly, heterotrimer of UreA (gamma), UreB (beta) and UreC (alpha) subunits. Three heterotrimers associate to form the active enzyme. Ni cation serves as cofactor. Carboxylation allows a single lysine to coordinate two nickel ions.

Its subcellular location is the cytoplasm. The enzyme catalyses urea + 2 H2O + H(+) = hydrogencarbonate + 2 NH4(+). The protein operates within nitrogen metabolism; urea degradation; CO(2) and NH(3) from urea (urease route): step 1/1. This chain is Urease subunit alpha, found in Chelativorans sp. (strain BNC1).